A 476-amino-acid chain; its full sequence is Angiotensinogen (476 aa).

Residues 1-24 (MAPAGLSLGAAILCLLAWAGLAAG) form the signal peptide. A disulfide bridge links Cys-42 with Cys-161. Residues Asn-295, Asn-319, Asn-362, and Asn-401 are each glycosylated (N-linked (GlcNAc...) asparagine).

It belongs to the serpin family. Post-translationally, in response to low blood pressure, the enzyme renin/REN cleaves angiotensinogen to produce angiotensin-1. Angiotensin-1 is a substrate of ACE (angiotensin converting enzyme) that removes a dipeptide to yield the physiologically active peptide angiotensin-2. Angiotensin-1 and angiotensin-2 can be further processed to generate angiotensin-3, angiotensin-4. Angiotensin 1-9 is cleaved from angiotensin-1 by ACE2 and can be further processed by ACE to produce angiotensin 1-7, angiotensin 1-5 and angiotensin 1-4. Angiotensin 1-7 has also been proposed to be cleaved from angiotensin-2 by ACE2 or from angiotensin-1 by MME (neprilysin). In terms of processing, the disulfide bond is labile. Angiotensinogen is present in the circulation in a near 40:60 ratio with the oxidized disulfide-bonded form, which preferentially interacts with receptor-bound renin.

The protein localises to the secreted. In terms of biological role, essential component of the renin-angiotensin system (RAS), a potent regulator of blood pressure, body fluid and electrolyte homeostasis. Acts directly on vascular smooth muscle as a potent vasoconstrictor, affects cardiac contractility and heart rate through its action on the sympathetic nervous system, and alters renal sodium and water absorption through its ability to stimulate the zona glomerulosa cells of the adrenal cortex to synthesize and secrete aldosterone. Acts by binding to angiotensin receptors AGTR1 and AGTR2. Also binds the DEAR/FBXW7-AS1 receptor. Its function is as follows. Stimulates aldosterone release. Functionally, is a ligand for the G-protein coupled receptor MAS1. Has vasodilator and antidiuretic effects. Has an antithrombotic effect that involves MAS1-mediated release of nitric oxide from platelets. The chain is Angiotensinogen (AGT) from Bos taurus (Bovine).